The chain runs to 553 residues: Cytochrome P450 86A2 (553 aa).

The chain crosses the membrane as a helical span at residues 2 to 20 (DVSNTMLLVAVVAAYWLWF). Residue C459 coordinates heme.

Belongs to the cytochrome P450 family. It depends on heme as a cofactor. In terms of tissue distribution, expressed in leaves, stems, flowers and siliques. Expressed at low levels in roots. Expressed in guard cells of cotyledons and leaves.

Its subcellular location is the membrane. The enzyme catalyses an organic molecule + reduced [NADPH--hemoprotein reductase] + O2 = an alcohol + oxidized [NADPH--hemoprotein reductase] + H2O + H(+). Its function is as follows. Catalyzes the omega-hydroxylation of various fatty acids (FA). Acts on saturated and unsaturated fatty acids with chain lengths from C12 to C18. Plays a major role in the biosynthesis of extracellular lipids. Involved in the biosynthesis of hydroxylated fatty acids required for cutin biosynthesis, cuticle development and repression of bacterial type III gene expression. The polypeptide is Cytochrome P450 86A2 (CYP86A2) (Arabidopsis thaliana (Mouse-ear cress)).